An 853-amino-acid polypeptide reads, in one-letter code: DNA mismatch repair protein MutS (853 aa).

614–621 (GPNMGGKS) provides a ligand contact to ATP.

Belongs to the DNA mismatch repair MutS family.

This protein is involved in the repair of mismatches in DNA. It is possible that it carries out the mismatch recognition step. This protein has a weak ATPase activity. The polypeptide is DNA mismatch repair protein MutS (Klebsiella pneumoniae subsp. pneumoniae (strain ATCC 700721 / MGH 78578)).